We begin with the raw amino-acid sequence, 106 residues long: Large ribosomal subunit protein bL31B (106 aa).

Residues 85-106 are disordered; the sequence is PVQVAEEPVAKGKKKPSLKKKK. Basic residues predominate over residues 95-106; sequence KGKKKPSLKKKK.

Belongs to the bacterial ribosomal protein bL31 family. Type B subfamily. Part of the 50S ribosomal subunit.

This Chlamydia felis (strain Fe/C-56) (Chlamydophila felis) protein is Large ribosomal subunit protein bL31B.